A 333-amino-acid chain; its full sequence is Ephrin-B2 (333 aa).

Residues M1–S27 form the signal peptide. Residues I28–V164 form the Ephrin RBD domain. Topologically, residues I28–A229 are extracellular. Residue N36 is glycosylated (N-linked (GlcNAc...) asparagine). 2 cysteine pairs are disulfide-bonded: C62–C101 and C89–C153. The N-linked (GlcNAc...) asparagine glycan is linked to N139. A disordered region spans residues G165–A213. Residues R175 to L185 are compositionally biased toward basic and acidic residues. Over residues N190–A213 the composition is skewed to polar residues. A helical membrane pass occupies residues G230–L250. Residues K251–V333 are Cytoplasmic-facing. S260 carries the post-translational modification Phosphoserine. Position 274 is a phosphothreonine (T274). R277 is modified (omega-N-methylarginine). The short motif at Y331–V333 is the PDZ-binding element.

It belongs to the ephrin family. In terms of assembly, interacts with PDZRN3. Binds to the receptor tyrosine kinases EPHA4, EPHB4 and EPHA3. (Microbial infection) Interacts with Hendra virus and Nipah virus G protein. In terms of processing, inducible phosphorylation of tyrosine residues in the cytoplasmic domain. As to expression, lung and kidney.

It localises to the cell membrane. Its subcellular location is the cell junction. The protein resides in the adherens junction. Functionally, cell surface transmembrane ligand for Eph receptors, a family of receptor tyrosine kinases which are crucial for migration, repulsion and adhesion during neuronal, vascular and epithelial development. Binds promiscuously Eph receptors residing on adjacent cells, leading to contact-dependent bidirectional signaling into neighboring cells. The signaling pathway downstream of the receptor is referred to as forward signaling while the signaling pathway downstream of the ephrin ligand is referred to as reverse signaling. Binds to receptor tyrosine kinase including EPHA4, EPHA3 and EPHB4. Together with EPHB4 plays a central role in heart morphogenesis and angiogenesis through regulation of cell adhesion and cell migration. EPHB4-mediated forward signaling controls cellular repulsion and segregation from EFNB2-expressing cells. May play a role in constraining the orientation of longitudinally projecting axons. In terms of biological role, (Microbial infection) Acts as a receptor for Hendra virus and Nipah virus. The sequence is that of Ephrin-B2 (EFNB2) from Homo sapiens (Human).